Here is a 394-residue protein sequence, read N- to C-terminus: Nicotinate phosphoribosyltransferase (394 aa).

His218 carries the phosphohistidine; by autocatalysis modification.

The protein belongs to the NAPRTase family. Post-translationally, transiently phosphorylated on a His residue during the reaction cycle. Phosphorylation strongly increases the affinity for substrates and increases the rate of nicotinate D-ribonucleotide production. Dephosphorylation regenerates the low-affinity form of the enzyme, leading to product release.

It carries out the reaction nicotinate + 5-phospho-alpha-D-ribose 1-diphosphate + ATP + H2O = nicotinate beta-D-ribonucleotide + ADP + phosphate + diphosphate. Its pathway is cofactor biosynthesis; NAD(+) biosynthesis; nicotinate D-ribonucleotide from nicotinate: step 1/1. In terms of biological role, catalyzes the synthesis of beta-nicotinate D-ribonucleotide from nicotinate and 5-phospho-D-ribose 1-phosphate at the expense of ATP. This chain is Nicotinate phosphoribosyltransferase, found in Xylella fastidiosa (strain 9a5c).